Consider the following 157-residue polypeptide: Phosphopantetheine adenylyltransferase (157 aa).

Position 8 (serine 8) interacts with substrate. ATP-binding positions include serine 8–phenylalanine 9 and histidine 16. Residues lysine 40, threonine 72, and arginine 86 each coordinate substrate. ATP is bound by residues glycine 87–arginine 89, glutamate 97, and tyrosine 122–serine 128.

The protein belongs to the bacterial CoaD family. In terms of assembly, homohexamer. Mg(2+) is required as a cofactor.

It is found in the cytoplasm. The catalysed reaction is (R)-4'-phosphopantetheine + ATP + H(+) = 3'-dephospho-CoA + diphosphate. The protein operates within cofactor biosynthesis; coenzyme A biosynthesis; CoA from (R)-pantothenate: step 4/5. Reversibly transfers an adenylyl group from ATP to 4'-phosphopantetheine, yielding dephospho-CoA (dPCoA) and pyrophosphate. The polypeptide is Phosphopantetheine adenylyltransferase (Gloeothece citriformis (strain PCC 7424) (Cyanothece sp. (strain PCC 7424))).